Reading from the N-terminus, the 167-residue chain is ATP synthase subunit b (167 aa).

A helical membrane pass occupies residues 15 to 37 (FWQTVIFLVTLYLLSKFAWGPIM).

This sequence belongs to the ATPase B chain family. As to quaternary structure, F-type ATPases have 2 components, F(1) - the catalytic core - and F(0) - the membrane proton channel. F(1) has five subunits: alpha(3), beta(3), gamma(1), delta(1), epsilon(1). F(0) has three main subunits: a(1), b(2) and c(10-14). The alpha and beta chains form an alternating ring which encloses part of the gamma chain. F(1) is attached to F(0) by a central stalk formed by the gamma and epsilon chains, while a peripheral stalk is formed by the delta and b chains.

The protein localises to the cell inner membrane. In terms of biological role, f(1)F(0) ATP synthase produces ATP from ADP in the presence of a proton or sodium gradient. F-type ATPases consist of two structural domains, F(1) containing the extramembraneous catalytic core and F(0) containing the membrane proton channel, linked together by a central stalk and a peripheral stalk. During catalysis, ATP synthesis in the catalytic domain of F(1) is coupled via a rotary mechanism of the central stalk subunits to proton translocation. Functionally, component of the F(0) channel, it forms part of the peripheral stalk, linking F(1) to F(0). The chain is ATP synthase subunit b from Cytophaga hutchinsonii (strain ATCC 33406 / DSM 1761 / CIP 103989 / NBRC 15051 / NCIMB 9469 / D465).